We begin with the raw amino-acid sequence, 156 residues long: 17 kDa lipoprotein (156 aa).

The N-terminal stretch at 1–21 (MKGSVRALCAFLGVGALGSAL) is a signal peptide. Cys22 carries the N-palmitoyl cysteine lipid modification. Cys22 carries S-diacylglycerol cysteine lipidation.

The protein resides in the cell membrane. This chain is 17 kDa lipoprotein (tpp17), found in Treponema pallidum (strain Nichols).